Consider the following 152-residue polypeptide: MSITQSFFVLTLAIFGAASDNPIADRKCIVISDGDLVMHERKPGQEFPYYVYMIPKGTEYDDQRWILESVGGDHYKLKNKFSGRYLVYGTFDYFLTAGAAVREMDHFKFTADGTGKYDISSKANGHPRSRGKNWGVMKDGEKHYFTVENCQE.

The signal sequence occupies residues 1–18 (MSITQSFFVLTLAIFGAA).

In terms of tissue distribution, salivary gland (at protein level).

Its subcellular location is the secreted. Functionally, salivary vasoactive peptide; induces vasodilatation in bioassay with rabbit aortic rings. The sequence is that of Erythema protein SVEP from Simulium vittatum (Striped black fly).